Here is a 131-residue protein sequence, read N- to C-terminus: Small ribosomal subunit protein uS8 (131 aa).

This sequence belongs to the universal ribosomal protein uS8 family. In terms of assembly, part of the 30S ribosomal subunit. Contacts proteins S5 and S12.

Its function is as follows. One of the primary rRNA binding proteins, it binds directly to 16S rRNA central domain where it helps coordinate assembly of the platform of the 30S subunit. This is Small ribosomal subunit protein uS8 from Parabacteroides distasonis (strain ATCC 8503 / DSM 20701 / CIP 104284 / JCM 5825 / NCTC 11152).